A 576-amino-acid polypeptide reads, in one-letter code: (+)-alpha-terpineol synthase (576 aa).

Residues arginine 286, aspartate 323, aspartate 327, arginine 466, and asparagine 469 each coordinate (2E)-geranyl diphosphate. The Mg(2+) site is built by aspartate 323 and aspartate 327. Positions 323 to 327 (DDVYD) match the DDXXD motif motif. Mg(2+) contacts are provided by asparagine 469, threonine 473, and glutamate 477.

Belongs to the terpene synthase family. Tpsb subfamily. The cofactor is Mg(2+). It depends on Mn(2+) as a cofactor.

The enzyme catalyses (2E,6E)-farnesyl diphosphate = beta-bisabolene + diphosphate. It catalyses the reaction (2E)-geranyl diphosphate + H2O = (R)-alpha-terpineol + diphosphate. It carries out the reaction (2E)-geranyl diphosphate = (4S)-limonene + diphosphate. The protein operates within secondary metabolite biosynthesis; terpenoid biosynthesis. Functionally, monoterpene synthase which catalyzes the conversion of (2E)-geranyl diphosphate (GPP) to (R)-alpha-terpineol and (4S)-limonene, as well as small quantities of linalool, myrcene, (-)-alpha-pinene, (+)-sabinene and geraniol. To a lower extent, catalyzes the conversion of (2E,6E)-farnesyl diphosphate (FPP) to beta-bisabolene. This Santalum album (White sandalwood) protein is (+)-alpha-terpineol synthase.